The primary structure comprises 425 residues: Histidine--tRNA ligase (425 aa).

The protein belongs to the class-II aminoacyl-tRNA synthetase family. In terms of assembly, homodimer.

Its subcellular location is the cytoplasm. It catalyses the reaction tRNA(His) + L-histidine + ATP = L-histidyl-tRNA(His) + AMP + diphosphate + H(+). The sequence is that of Histidine--tRNA ligase from Streptomyces coelicolor (strain ATCC BAA-471 / A3(2) / M145).